Reading from the N-terminus, the 422-residue chain is Vitamin D3 receptor B (422 aa).

A DNA-binding region (nuclear receptor) is located at residues Pro20–Thr95. Cys23, Cys26, Cys40, Cys43, Cys59, Cys65, Cys75, and Cys78 together coordinate Zn(2+). 2 consecutive NR C4-type zinc fingers follow at residues Cys23–Cys43 and Cys59–Cys78. The tract at residues Asp96 to Asp125 is hinge. Residues Ile106–Arg128 are disordered. The NR LBD domain maps to Glu126–Gly418. Tyr142 is a calcitriol binding site. The disordered stretch occupies residues Ser145 to Asp190. Low complexity predominate over residues Arg163–Ser185. Ser234 is a calcitriol binding site. An interaction with coactivator LXXLL motif region spans residues Lys243 to Lys261. Arg271, Ser275, His302, and His392 together coordinate calcitriol. The 9aaTAD signature appears at Pro411 to Gly419.

It belongs to the nuclear hormone receptor family. As to quaternary structure, homodimer in the absence of bound vitamin D3. Heterodimer with RXRA after vitamin D3 binding. Interacts with ncoa1 and possibly other coactivators, leading to a strong increase of transcription of target genes. As to expression, detected in embryo 24 to 48 hours after fertilization, and in intestinal bulb.

It localises to the nucleus. The protein resides in the cytoplasm. Nuclear receptor for calcitriol, the active form of vitamin D3 which mediates the action of this vitamin on cells. Enters the nucleus upon vitamin D3 binding where it forms heterodimers with the retinoid X receptor/RXR. The VDR-RXR heterodimers bind to specific response elements on DNA and activate the transcription of vitamin D3-responsive target genes. Recruited to promoters via its interaction with BAZ1B/WSTF which mediates the interaction with acetylated histones, an essential step for VDR-promoter association. Plays a central role in calcium homeostasis. This Danio rerio (Zebrafish) protein is Vitamin D3 receptor B (vdrb).